Reading from the N-terminus, the 183-residue chain is Nucleoside diphosphate kinase (183 aa).

Residue lysine 11 coordinates ATP. Positions 56-88 (EWLRSAGQKLLKAYQELGIDPRAKIGTDDPVEV) are insert. Residues arginine 120, threonine 126, arginine 137, and asparagine 157 each coordinate ATP. Histidine 160 serves as the catalytic Pros-phosphohistidine intermediate.

The protein belongs to the NDK family. Mg(2+) is required as a cofactor.

It localises to the cytoplasm. The enzyme catalyses a 2'-deoxyribonucleoside 5'-diphosphate + ATP = a 2'-deoxyribonucleoside 5'-triphosphate + ADP. The catalysed reaction is a ribonucleoside 5'-diphosphate + ATP = a ribonucleoside 5'-triphosphate + ADP. Functionally, major role in the synthesis of nucleoside triphosphates other than ATP. The ATP gamma phosphate is transferred to the NDP beta phosphate via a ping-pong mechanism, using a phosphorylated active-site intermediate. This is Nucleoside diphosphate kinase (ndk) from Pyrobaculum aerophilum (strain ATCC 51768 / DSM 7523 / JCM 9630 / CIP 104966 / NBRC 100827 / IM2).